Here is a 68-residue protein sequence, read N- to C-terminus: Large ribosomal subunit protein bL35 (68 aa).

2 stretches are compositionally biased toward basic residues: residues 1–15 (MPKM…KRFK) and 23–38 (TARK…HKSS). Positions 1–38 (MPKMKSHSGTKKRFKVTGSGKVTARKAGKRHLNEHKSS) are disordered.

Belongs to the bacterial ribosomal protein bL35 family.

In Cutibacterium acnes (strain DSM 16379 / KPA171202) (Propionibacterium acnes), this protein is Large ribosomal subunit protein bL35.